Here is a 274-residue protein sequence, read N- to C-terminus: Envelope glycoprotein L (274 aa).

A signal peptide spans 1–21 (MMPLLLLILLSTRNLLGAAQS). The region spanning 51–251 (VEHKCREALA…RSYRDRFPAV (201 aa)) is the gL betaherpesvirus-type domain. The cysteines at positions 156 and 161 are disulfide-linked.

Belongs to the herpesviridae glycoprotein L (gL) family. Betaherpesvirinae gL subfamily. As to quaternary structure, interacts with glycoprotein H (gH); this interaction is necessary for the correct processing and cell surface expression of gH.

It localises to the virion membrane. Its subcellular location is the host cell membrane. It is found in the host Golgi apparatus. The protein resides in the host trans-Golgi network. Its function is as follows. The heterodimer glycoprotein H-glycoprotein L is required for the fusion of viral and plasma membranes leading to virus entry into the host cell. Acts as a functional inhibitor of gH and maintains gH in an inhibited form. Upon binding to host integrins, gL dissociates from gH leading to activation of the viral fusion glycoproteins gB and gH. In Mus musculus (Mouse), this protein is Envelope glycoprotein L.